The chain runs to 602 residues: Protein DGS1, mitochondrial (602 aa).

The next 2 helical transmembrane spans lie at 300-320 and 465-485; these read LYWV…IWLL and INFA…MLTV.

Component of a mitochondrial large protein complex that contains, at least, MIC60, DGS1, TOM40 (e.g. TOM40-1), TOM20 proteins (e.g. TOM20-2), and petC/RISP.

It localises to the mitochondrion outer membrane. Its function is as follows. Involved in galactoglycerolipid biosynthesis. Contributes to an intracellular signal that regulates an alternative DGD1-independent galactoglycerolipid biosynthesis pathway in chloroplasts. Being involved in mitochondrial lipid homeostasis, modulates mitochondrion biogenesis and physiology, as well as stress responses. This is Protein DGS1, mitochondrial from Arabidopsis thaliana (Mouse-ear cress).